The primary structure comprises 395 residues: S-adenosylmethionine synthase 5 (395 aa).

E10 provides a ligand contact to Mg(2+). ATP is bound at residue H16. E44 provides a ligand contact to K(+). L-methionine-binding residues include E57 and Q100. ATP contacts are provided by residues 168 to 170, 236 to 239, D247, 253 to 254, A270, K274, and K278; these read DGK, SGRF, and RK. Residue D247 participates in L-methionine binding. K278 is an L-methionine binding site.

It belongs to the AdoMet synthase family. As to quaternary structure, homotetramer. The cofactor is Mn(2+). Mg(2+) serves as cofactor. It depends on Co(2+) as a cofactor. K(+) is required as a cofactor.

It localises to the cytoplasm. The catalysed reaction is L-methionine + ATP + H2O = S-adenosyl-L-methionine + phosphate + diphosphate. It functions in the pathway amino-acid biosynthesis; S-adenosyl-L-methionine biosynthesis; S-adenosyl-L-methionine from L-methionine: step 1/1. In terms of biological role, catalyzes the formation of S-adenosylmethionine from methionine and ATP. The reaction comprises two steps that are both catalyzed by the same enzyme: formation of S-adenosylmethionine (AdoMet) and triphosphate, and subsequent hydrolysis of the triphosphate. The protein is S-adenosylmethionine synthase 5 (METK5) of Populus trichocarpa (Western balsam poplar).